We begin with the raw amino-acid sequence, 136 residues long: Small ribosomal subunit protein uS9 (136 aa).

The tract at residues L96–R136 is disordered. A compositionally biased stretch (basic and acidic residues) spans P98–A116. Positions K117–R136 are enriched in basic residues.

This sequence belongs to the universal ribosomal protein uS9 family.

This Prochlorococcus marinus (strain MIT 9515) protein is Small ribosomal subunit protein uS9.